The chain runs to 570 residues: Proline--tRNA ligase (570 aa).

The protein belongs to the class-II aminoacyl-tRNA synthetase family. ProS type 1 subfamily. As to quaternary structure, homodimer.

It localises to the cytoplasm. The catalysed reaction is tRNA(Pro) + L-proline + ATP = L-prolyl-tRNA(Pro) + AMP + diphosphate. Functionally, catalyzes the attachment of proline to tRNA(Pro) in a two-step reaction: proline is first activated by ATP to form Pro-AMP and then transferred to the acceptor end of tRNA(Pro). As ProRS can inadvertently accommodate and process non-cognate amino acids such as alanine and cysteine, to avoid such errors it has two additional distinct editing activities against alanine. One activity is designated as 'pretransfer' editing and involves the tRNA(Pro)-independent hydrolysis of activated Ala-AMP. The other activity is designated 'posttransfer' editing and involves deacylation of mischarged Ala-tRNA(Pro). The misacylated Cys-tRNA(Pro) is not edited by ProRS. In Acidithiobacillus ferrooxidans (strain ATCC 23270 / DSM 14882 / CIP 104768 / NCIMB 8455) (Ferrobacillus ferrooxidans (strain ATCC 23270)), this protein is Proline--tRNA ligase.